The sequence spans 331 residues: N-arachidonyl glycine receptor (331 aa).

Topologically, residues 1–26 (MATLSNHNQLDLSNGSHPEEYKIAAL) are extracellular. Asn-14 is a glycosylation site (N-linked (GlcNAc...) asparagine). Residues 27–47 (VFYSCIFLIGLFVNVTALWVF) form a helical membrane-spanning segment. Topologically, residues 48–56 (SCTTKKRTT) are cytoplasmic. The chain crosses the membrane as a helical span at residues 57–77 (VTIYMMNVALLDLVFILSLPF). Residues 78 to 95 (RMFYYAKGEWPFGEYFCH) are Extracellular-facing. A disulfide bridge links Cys-94 with Cys-172. The helical transmembrane segment at 96–116 (ILGALVVFYPSLALWLLAFIS) threads the bilayer. Residues 117-138 (ADRYMAIVQPKYAKELKNTGKA) lie on the Cytoplasmic side of the membrane. A helical transmembrane segment spans residues 139–159 (VLACGGVWVMTLTTTVPLLLL). Topologically, residues 160-191 (YEDPDKASSPATCLKISDITHLKAVNVLNFTR) are extracellular. Asn-188 is a glycosylation site (N-linked (GlcNAc...) asparagine). The chain crosses the membrane as a helical span at residues 192-212 (LIFFFLIPLFIMIGCYVVIIH). Residues 213–236 (SLLRGQTSKLKPKVKEKSIRIIMT) lie on the Cytoplasmic side of the membrane. A helical transmembrane segment spans residues 237-257 (LLLQVLVCFVPFHICFAVLML). Residues 258 to 268 (QGQENSYSPWG) lie on the Extracellular side of the membrane. The helical transmembrane segment at 269–289 (AFTTFLMNLSTCLDVVLYYIV) threads the bilayer. Topologically, residues 290-331 (SKQFQARVISVMLYRNYLRSVRRKSVRSGSLRSLSNMNSEML) are cytoplasmic. Ser-322 carries the post-translational modification Phosphoserine.

It belongs to the G-protein coupled receptor 1 family. As to expression, expressed in the eye including cornea, retina, iris and ciliary epithelium (at protein level). Expressed in spleen, liver and lymphocytes with highest expression levels in intestinal intraepithelial lymphocytes.

It is found in the cell membrane. The protein resides in the cytoplasmic vesicle membrane. Functionally, g protein-coupled receptor (GPCR) that plays a role in diverse physiological processes particularly within the immune and nervous systems. Becomes active when triggered by various endogenous ligands including endocannabinoid N-arachidonyl glycine (NAGly), delta-9-tetrahydrocannabinol or resolvin D2/RvD2 derived from the omega-3 fatty acid docosahexaenoic acid (DHA). Upon RvD2 binding, facilitates the resolution of inflammation, aiding in tissue repair and homeostasis. Mechanistically, RvD2 ligation initiates Galphas protein coupling, activation of cAMP-PKA signaling pathway and phosphorylation of STAT3, leading to RvD2-stimulated macrophage phagocytosis. Mediates NAGly-induced process of reorganization of actin filaments and induction of acrosomal exocytosis. Activation by N-arachidonoyl glycine (NAGly) can also induce apoptosis in macrophages. Plays a role in homeostasis of CD8+ subsets of intraepithelial lymphocytes (IELs) (CD8alphaalpha and CD8alphabeta IELs) in small intestine by supporting preferential migration of CD8alphaalpha T-cells to intraepithelial compartment over lamina propria compartment, and by mediating their reconstitution into small intestine after bone marrow transplant. Also participates in hypotensive responses, mediating reduction in intraocular and blood pressure. This Mus musculus (Mouse) protein is N-arachidonyl glycine receptor.